The chain runs to 92 residues: Small ribosomal subunit protein uS19 (92 aa).

It belongs to the universal ribosomal protein uS19 family.

Its function is as follows. Protein S19 forms a complex with S13 that binds strongly to the 16S ribosomal RNA. The protein is Small ribosomal subunit protein uS19 of Borrelia recurrentis (strain A1).